The sequence spans 270 residues: Nuclear receptor-interacting protein 2 (270 aa).

A compositionally biased stretch (basic and acidic residues) spans 1–27 (MSTGQEARRDEGDSRKEQEASLRDRAH). The disordered stretch occupies residues 1–33 (MSTGQEARRDEGDSRKEQEASLRDRAHLSQQRQ). The interval 61-99 (KDLQPHSVIQRRLVEGNQRRLQGESPLLQALIRGHDSSR) is interaction with NR1F2. The LXXLL motif signature appears at 192–196 (LQTLL).

As to quaternary structure, interacts with NR1F2, RARA and THRB in a ligand-dependent manner. In terms of tissue distribution, expression is restricted to the central nervous system (neurons in the dentate gyrus of the hippocampus, the amygdala, thalamic and hypothalamic regions).

The protein localises to the nucleus. Functionally, down-regulates transcriptional activation by nuclear receptors, such as NR1F2. The sequence is that of Nuclear receptor-interacting protein 2 (Nrip2) from Mus musculus (Mouse).